Reading from the N-terminus, the 329-residue chain is Oligopeptide transport ATP-binding protein AppF (329 aa).

Residues 10–261 (LELRDVKKYF…PLHPYTQALL (252 aa)) form the ABC transporter domain. Position 53-60 (53-60 (GESGCGKS)) interacts with ATP.

Belongs to the ABC transporter superfamily.

It is found in the cell membrane. Functionally, this protein is a component of an oligopeptide permease, a binding protein-dependent transport system. This APP system can completely substitute for the OPP system in both sporulation and genetic competence, though, unlike OPP, is incapable of transporting tripeptides. Probably responsible for energy coupling to the transport system. This Bacillus subtilis (strain 168) protein is Oligopeptide transport ATP-binding protein AppF (appF).